Consider the following 213-residue polypeptide: Orotate phosphoribosyltransferase (213 aa).

Lysine 26 contacts 5-phospho-alpha-D-ribose 1-diphosphate. Position 34–35 (34–35) interacts with orotate; that stretch reads FF. 5-phospho-alpha-D-ribose 1-diphosphate is bound by residues 72–73, arginine 99, lysine 100, lysine 103, histidine 105, and 124–132; these read YK and DDVITAGTA. Positions 128 and 156 each coordinate orotate.

The protein belongs to the purine/pyrimidine phosphoribosyltransferase family. PyrE subfamily. As to quaternary structure, homodimer. Mg(2+) serves as cofactor.

The enzyme catalyses orotidine 5'-phosphate + diphosphate = orotate + 5-phospho-alpha-D-ribose 1-diphosphate. It participates in pyrimidine metabolism; UMP biosynthesis via de novo pathway; UMP from orotate: step 1/2. In terms of biological role, catalyzes the transfer of a ribosyl phosphate group from 5-phosphoribose 1-diphosphate to orotate, leading to the formation of orotidine monophosphate (OMP). This is Orotate phosphoribosyltransferase from Photobacterium profundum (strain SS9).